The primary structure comprises 157 residues: Transcriptional repressor NrdR (157 aa).

Residues 3–34 (CPFCRHPDSRVIDSRTSDDGLSIRRRRQCPEC) fold into a zinc finger. One can recognise an ATP-cone domain in the interval 46-136 (LSVIKRSGVV…VYQAFDSLED (91 aa)).

It belongs to the NrdR family. The cofactor is Zn(2+).

Negatively regulates transcription of bacterial ribonucleotide reductase nrd genes and operons by binding to NrdR-boxes. The protein is Transcriptional repressor NrdR of Leifsonia xyli subsp. xyli (strain CTCB07).